Here is a 358-residue protein sequence, read N- to C-terminus: 5-amino-6-(D-ribitylamino)uracil--L-tyrosine 4-hydroxyphenyl transferase 2 (358 aa).

A Radical SAM core domain is found at 45–292 (VTFVKNTNIE…ESIKNIQAPR (248 aa)). Residues Cys-59, Cys-63, and Cys-66 each coordinate [4Fe-4S] cluster.

Belongs to the radical SAM superfamily. CofH family. In terms of assembly, consists of two subunits, CofG and CofH. Requires [4Fe-4S] cluster as cofactor.

It catalyses the reaction 5-amino-6-(D-ribitylamino)uracil + L-tyrosine + S-adenosyl-L-methionine = 5-amino-5-(4-hydroxybenzyl)-6-(D-ribitylimino)-5,6-dihydrouracil + 2-iminoacetate + 5'-deoxyadenosine + L-methionine + H(+). It participates in cofactor biosynthesis; coenzyme F0 biosynthesis. In terms of biological role, catalyzes the radical-mediated synthesis of 5-amino-5-(4-hydroxybenzyl)-6-(D-ribitylimino)-5,6-dihydrouracil from 5-amino-6-(D-ribitylamino)uracil and L-tyrosine. This Methanococcus maripaludis (strain DSM 14266 / JCM 13030 / NBRC 101832 / S2 / LL) protein is 5-amino-6-(D-ribitylamino)uracil--L-tyrosine 4-hydroxyphenyl transferase 2.